Here is a 384-residue protein sequence, read N- to C-terminus: ATP phosphoribosyltransferase regulatory subunit (384 aa).

Belongs to the class-II aminoacyl-tRNA synthetase family. HisZ subfamily. As to quaternary structure, heteromultimer composed of HisG and HisZ subunits.

It is found in the cytoplasm. The protein operates within amino-acid biosynthesis; L-histidine biosynthesis; L-histidine from 5-phospho-alpha-D-ribose 1-diphosphate: step 1/9. Required for the first step of histidine biosynthesis. May allow the feedback regulation of ATP phosphoribosyltransferase activity by histidine. In Paracidovorax citrulli (strain AAC00-1) (Acidovorax citrulli), this protein is ATP phosphoribosyltransferase regulatory subunit.